Here is a 342-residue protein sequence, read N- to C-terminus: Tetraacyldisaccharide 4'-kinase (342 aa).

Position 68-75 (68-75 (TVGGTGKT)) interacts with ATP.

The protein belongs to the LpxK family.

The catalysed reaction is a lipid A disaccharide + ATP = a lipid IVA + ADP + H(+). Its pathway is glycolipid biosynthesis; lipid IV(A) biosynthesis; lipid IV(A) from (3R)-3-hydroxytetradecanoyl-[acyl-carrier-protein] and UDP-N-acetyl-alpha-D-glucosamine: step 6/6. Its function is as follows. Transfers the gamma-phosphate of ATP to the 4'-position of a tetraacyldisaccharide 1-phosphate intermediate (termed DS-1-P) to form tetraacyldisaccharide 1,4'-bis-phosphate (lipid IVA). This is Tetraacyldisaccharide 4'-kinase from Burkholderia vietnamiensis (strain G4 / LMG 22486) (Burkholderia cepacia (strain R1808)).